The sequence spans 330 residues: Class III chitinase ARB_03514 (330 aa).

A signal peptide spans 1 to 22 (MSSVKNILSFVALFAGVKTAYA). The GH18 domain maps to 23–314 (GLNSPGHNNV…SAVKGALSAG (292 aa)). 2 N-linked (GlcNAc...) asparagine glycosylation sites follow: asparagine 61 and asparagine 135. Glutamate 155 serves as the catalytic Proton donor. N-linked (GlcNAc...) asparagine glycosylation is found at asparagine 278 and asparagine 302.

It belongs to the glycosyl hydrolase 18 family. Chitinase class III subfamily. In terms of assembly, monomer.

The protein resides in the secreted. It catalyses the reaction Random endo-hydrolysis of N-acetyl-beta-D-glucosaminide (1-&gt;4)-beta-linkages in chitin and chitodextrins.. Its function is as follows. Secreted chitinase involved in the degradation of chitin, a component of the cell walls of fungi and exoskeletal elements of some animals (including worms and arthropods). Plays a morphogenetic role during apical growth, cell division and differentiation (cell wall morphogenesis). This chain is Class III chitinase ARB_03514, found in Arthroderma benhamiae (strain ATCC MYA-4681 / CBS 112371) (Trichophyton mentagrophytes).